The primary structure comprises 200 residues: Small ribosomal subunit protein uS4 (200 aa).

The 64-residue stretch at 94–157 (SRLDNLVFRA…QTSPQVKDAV (64 aa)) folds into the S4 RNA-binding domain.

This sequence belongs to the universal ribosomal protein uS4 family. In terms of assembly, part of the 30S ribosomal subunit. Contacts protein S5. The interaction surface between S4 and S5 is involved in control of translational fidelity.

Its function is as follows. One of the primary rRNA binding proteins, it binds directly to 16S rRNA where it nucleates assembly of the body of the 30S subunit. With S5 and S12 plays an important role in translational accuracy. The protein is Small ribosomal subunit protein uS4 of Metamycoplasma arthritidis (strain 158L3-1) (Mycoplasma arthritidis).